An 82-amino-acid polypeptide reads, in one-letter code: Mu-conotoxin GVIIJ (82 aa).

Residues 1 to 22 form the signal peptide; sequence MKLTCVVIVAALLLTACQLITA. Positions 23 to 47 are excised as a propeptide; the sequence is LDCGGTQKHRALRSTIKLSLLRQHR. Tryptophan 49 carries the 6'-bromotryptophan modification. Intrachain disulfides connect cysteine 50/cysteine 65, cysteine 57/cysteine 69, and cysteine 64/cysteine 76. Position 53 is a 4-hydroxyproline (proline 53). Cysteine 71 is an a protein binding site.

This sequence belongs to the conotoxin O1 superfamily. Cys-71 is a key residue that tethers to the channel by covalent attachment, leading to nearly irreversible inhibition (k(off) very low). In order to determine the solution structure without dimerization, this residue was mutated to Cys. In terms of tissue distribution, expressed by the venom duct.

The protein localises to the secreted. In terms of biological role, mu-conotoxins block voltage-gated sodium channels (Nav). This toxin (GVIIJ(SSG)) blocks Nav1.1/SCN1A (Kd=11 nM), Nav1.2/SCN2A (Kd=11 nM), Nav1.3/SCN3A (Kd=15 nM), Nav1.4/SCN4A (Kd=4.7 nM), Nav1.6/SCN8A (Kd=360 nM) and Nav1.7/SCN9A (Kd=41 nM). It binds the channel at the newly described site 8, which is composed by two surfaces whose one contains a non-disulfide-bonded cysteine (which is free to covalently bind the toxin Cys-71). It is noteworthy that coexpression of subunits beta-2 or beta-4 (but not beta-1 or beta-3) protects rNav1.1-1.7 against block by the toxin, since these subunits (thanks to their extracellular domain) covalently bind to the key cysteine of the channel, thus preventing the covalent binding of the toxin. The polypeptide is Mu-conotoxin GVIIJ (Conus geographus (Geography cone)).